The primary structure comprises 404 residues: CCA-adding enzyme (404 aa).

2 residues coordinate ATP: G27 and R30. CTP is bound by residues G27 and R30. The Mg(2+) site is built by D40 and D42. Positions 111, 154, 157, 160, and 163 each coordinate ATP. CTP-binding residues include R111, D154, R157, R160, and R163.

The protein belongs to the tRNA nucleotidyltransferase/poly(A) polymerase family. Bacterial CCA-adding enzyme type 3 subfamily. In terms of assembly, homodimer. The cofactor is Mg(2+).

It catalyses the reaction a tRNA precursor + 2 CTP + ATP = a tRNA with a 3' CCA end + 3 diphosphate. The catalysed reaction is a tRNA with a 3' CCA end + 2 CTP + ATP = a tRNA with a 3' CCACCA end + 3 diphosphate. Its function is as follows. Catalyzes the addition and repair of the essential 3'-terminal CCA sequence in tRNAs without using a nucleic acid template. Adds these three nucleotides in the order of C, C, and A to the tRNA nucleotide-73, using CTP and ATP as substrates and producing inorganic pyrophosphate. tRNA 3'-terminal CCA addition is required both for tRNA processing and repair. Also involved in tRNA surveillance by mediating tandem CCA addition to generate a CCACCA at the 3' terminus of unstable tRNAs. While stable tRNAs receive only 3'-terminal CCA, unstable tRNAs are marked with CCACCA and rapidly degraded. In Geobacillus kaustophilus (strain HTA426), this protein is CCA-adding enzyme.